Consider the following 1070-residue polypeptide: DNA-directed RNA polymerase subunit beta (1070 aa).

It belongs to the RNA polymerase beta chain family. In plastids the minimal PEP RNA polymerase catalytic core is composed of four subunits: alpha, beta, beta', and beta''. When a (nuclear-encoded) sigma factor is associated with the core the holoenzyme is formed, which can initiate transcription.

The protein resides in the plastid. The protein localises to the chloroplast. It carries out the reaction RNA(n) + a ribonucleoside 5'-triphosphate = RNA(n+1) + diphosphate. Its function is as follows. DNA-dependent RNA polymerase catalyzes the transcription of DNA into RNA using the four ribonucleoside triphosphates as substrates. In Illicium oligandrum (Star anise), this protein is DNA-directed RNA polymerase subunit beta.